We begin with the raw amino-acid sequence, 402 residues long: CCA-adding enzyme (402 aa).

ATP is bound by residues G32 and R35. Residues G32 and R35 each coordinate CTP. The Mg(2+) site is built by D45 and D47. ATP-binding residues include R116, D159, R162, R165, and R168. 5 residues coordinate CTP: R116, D159, R162, R165, and R168.

The protein belongs to the tRNA nucleotidyltransferase/poly(A) polymerase family. Bacterial CCA-adding enzyme type 3 subfamily. In terms of assembly, homodimer. Requires Mg(2+) as cofactor.

It catalyses the reaction a tRNA precursor + 2 CTP + ATP = a tRNA with a 3' CCA end + 3 diphosphate. The catalysed reaction is a tRNA with a 3' CCA end + 2 CTP + ATP = a tRNA with a 3' CCACCA end + 3 diphosphate. In terms of biological role, catalyzes the addition and repair of the essential 3'-terminal CCA sequence in tRNAs without using a nucleic acid template. Adds these three nucleotides in the order of C, C, and A to the tRNA nucleotide-73, using CTP and ATP as substrates and producing inorganic pyrophosphate. tRNA 3'-terminal CCA addition is required both for tRNA processing and repair. Also involved in tRNA surveillance by mediating tandem CCA addition to generate a CCACCA at the 3' terminus of unstable tRNAs. While stable tRNAs receive only 3'-terminal CCA, unstable tRNAs are marked with CCACCA and rapidly degraded. This is CCA-adding enzyme from Streptococcus pyogenes serotype M4 (strain MGAS10750).